The sequence spans 133 residues: Large ribosomal subunit protein uL22 (133 aa).

It belongs to the universal ribosomal protein uL22 family. Part of the 50S ribosomal subunit.

Functionally, this protein binds specifically to 23S rRNA; its binding is stimulated by other ribosomal proteins, e.g. L4, L17, and L20. It is important during the early stages of 50S assembly. It makes multiple contacts with different domains of the 23S rRNA in the assembled 50S subunit and ribosome. Its function is as follows. The globular domain of the protein is located near the polypeptide exit tunnel on the outside of the subunit, while an extended beta-hairpin is found that lines the wall of the exit tunnel in the center of the 70S ribosome. In Borrelia garinii subsp. bavariensis (strain ATCC BAA-2496 / DSM 23469 / PBi) (Borreliella bavariensis), this protein is Large ribosomal subunit protein uL22.